The sequence spans 318 residues: Aquaporin-1 (318 aa).

Over residues 1 to 16 (MVQFGSRANTNMTGLP) the composition is skewed to polar residues. Residues 1-27 (MVQFGSRANTNMTGLPTEQAVEDRRVG) form a disordered region. Over 1 to 36 (MVQFGSRANTNMTGLPTEQAVEDRRVGNPKRDRMRN) the chain is Cytoplasmic. The helical transmembrane segment at 37-57 (ALVIVLGEFCGTFMFLLLSFI) threads the bilayer. Topologically, residues 58 to 77 (GAQTALVTNSPSDAGSPLLP) are extracellular. Residues 78–98 (FSLMYIAASFGTALAVNVWIF) form a helical membrane-spanning segment. Over 99-108 (YRVSGGMFNP) the chain is Cytoplasmic. An NPA 1 motif is present at residues 107–109 (NPA). Residues 109-129 (AVTLGLVLVGAVTPIHALLII) traverse the membrane as a helical segment. The Extracellular segment spans residues 130-165 (PTQLVAAITAAGITDALLPGKLLVTNALGNGTSVAQ). A glycan (N-linked (GlcNAc...) asparagine) is linked at N159. The helical transmembrane segment at 166–186 (GVFIEMFLTSQLVLTVYFLAV) threads the bilayer. Over 187–193 (EKHRSTH) the chain is Cytoplasmic. Residues 194-214 (LAPIGIGISVFIAHICATNWT) traverse the membrane as a helical segment. Residues 215 to 236 (GTSINPARSFGPSVVAGFHGYD) lie on the Extracellular side of the membrane. An NPA 2 motif is present at residues 219–221 (NPA). A helical membrane pass occupies residues 237–257 (WIYYIGPFMGSLLAFGCYKIF). Topologically, residues 258-318 (KVLEYQTANP…NDSVIDDQMV (61 aa)) are cytoplasmic. Positions 268 to 318 (GQDDDNLDRSGHHHFFGHRKEPMPHTHTDNIEPKDHGVPQRNDSVIDDQMV) are disordered. Residues 285–305 (HRKEPMPHTHTDNIEPKDHGV) are compositionally biased toward basic and acidic residues.

Belongs to the MIP/aquaporin (TC 1.A.8) family.

The protein localises to the nucleus membrane. The catalysed reaction is H2O(in) = H2O(out). Functionally, probable water channel involved in responses to changes in environmental conditions and conidiation. Involved in responses to hyperosmotic conditions, oxidative stress and cell wall destabilization. Also required for proper transcriptional activation of genes involved in aurofusarin biosynthesis. Not involved in pathogenicity, but negatively regulates deoxynivalenol (DON) production. This Gibberella zeae (strain ATCC MYA-4620 / CBS 123657 / FGSC 9075 / NRRL 31084 / PH-1) (Wheat head blight fungus) protein is Aquaporin-1.